Reading from the N-terminus, the 248-residue chain is PF03932 family protein CutC (248 aa).

The protein belongs to the CutC family. In terms of assembly, homodimer.

It localises to the cytoplasm. This chain is PF03932 family protein CutC, found in Escherichia coli (strain SMS-3-5 / SECEC).